Here is a 95-residue protein sequence, read N- to C-terminus: Putative membrane protein insertion efficiency factor (95 aa).

Residues 72-95 are disordered; sequence FDPVPDAPTSPSPSSSCSCKGPHP. Residues 83-95 show a composition bias toward low complexity; sequence SPSSSCSCKGPHP.

Belongs to the UPF0161 family.

The protein localises to the cell inner membrane. Functionally, could be involved in insertion of integral membrane proteins into the membrane. This chain is Putative membrane protein insertion efficiency factor, found in Xanthomonas axonopodis pv. citri (strain 306).